Consider the following 120-residue polypeptide: Cell division protein FtsL (120 aa).

The tract at residues 1 to 22 is disordered; sequence MSNVAYKSNLEPNRVHREAEQP. At 1–37 the chain is on the cytoplasmic side; sequence MSNVAYKSNLEPNRVHREAEQPKKQILKRGQMTLGEK. Over residues 13–22 the composition is skewed to basic and acidic residues; the sequence is NRVHREAEQP. Residues 38–58 traverse the membrane as a helical segment; that stretch reads VIITIALAIVLVVAFRIISVQ. Residues 59-120 lie on the Extracellular side of the membrane; it reads AQIYTVNQEI…GDNVKVVDGQ (62 aa).

This sequence belongs to the FtsL family.

It is found in the cell membrane. In terms of biological role, essential cell division protein. The protein is Cell division protein FtsL of Listeria monocytogenes serovar 1/2a (strain ATCC BAA-679 / EGD-e).